Consider the following 296-residue polypeptide: Coiled-coil domain-containing protein 69 (296 aa).

Over residues 1–18 (MGCRHSRLSSCKPPKKKR) the composition is skewed to basic residues. The interval 1–41 (MGCRHSRLSSCKPPKKKRQEPEPEQPPRPEPHELGPLNGDT) is disordered. A lipid anchor (N-myristoyl glycine) is attached at glycine 2. Residues 19–33 (QEPEPEQPPRPEPHE) show a composition bias toward basic and acidic residues. The stretch at 48-272 (CASEEAERHQ…QEKEELLYRV (225 aa)) forms a coiled coil. A phosphoserine mark is found at serine 154 and serine 241.

Belongs to the CCDC69 family. Highly expressed in duodenum, esophagus, pancreas, prostate, salivary gland, thymus and urinary bladder.

Its subcellular location is the cytoplasm. The protein resides in the cytoskeleton. It is found in the spindle. The protein localises to the midbody. Functionally, may act as a scaffold to regulate the recruitment and assembly of spindle midzone components. Required for the localization of AURKB and PLK1 to the spindle midzone. The sequence is that of Coiled-coil domain-containing protein 69 from Homo sapiens (Human).